The primary structure comprises 470 residues: Carboxypeptidase Q (470 aa).

Positions 1 to 18 (MRSLFFLFIVHLLALGSG) are cleaved as a signal peptide. Residues 19–42 (KAVFKNGVSQRTFREIKEEIANYE) constitute a propeptide that is removed on maturation. N-linked (GlcNAc...) asparagine glycosylation is present at asparagine 59. Histidine 288 and aspartate 300 together coordinate Zn(2+). Catalysis depends on glutamate 334, which acts as the Nucleophile. Glutamate 335 is a binding site for Zn(2+). Residue asparagine 351 is glycosylated (N-linked (GlcNAc...) asparagine). Aspartate 362 provides a ligand contact to Zn(2+). Residue asparagine 394 is glycosylated (N-linked (GlcNAc...) asparagine). A Zn(2+)-binding site is contributed by histidine 432.

The protein belongs to the peptidase M28 family. Homodimer. The monomeric form is inactive while the homodimer is active. Post-translationally, N-glycosylated. The secreted form is modified by hybrid or complex type oligosaccharide chains.

Its subcellular location is the endoplasmic reticulum. It localises to the golgi apparatus. The protein localises to the lysosome. The protein resides in the secreted. Functionally, carboxypeptidase that may play an important role in the hydrolysis of circulating peptides. Catalyzes the hydrolysis of dipeptides with unsubstituted terminals into amino acids. May play a role in the liberation of thyroxine hormone from its thyroglobulin (Tg) precursor. This chain is Carboxypeptidase Q (Cpq), found in Mus musculus (Mouse).